Reading from the N-terminus, the 338-residue chain is Aspartate-semialdehyde dehydrogenase (338 aa).

Residues 13 to 16 (SGAV) and 41 to 42 (RS) contribute to the NADP(+) site. A phosphate-binding site is contributed by Arg-101. The active-site Acyl-thioester intermediate is Cys-132. Gln-159 lines the substrate pocket. NADP(+) contacts are provided by residues 162–163 (SG) and Pro-187. Residue Lys-216 participates in phosphate binding. Arg-238 provides a ligand contact to substrate. His-245 serves as the catalytic Proton acceptor. Residue Asn-317 coordinates NADP(+).

This sequence belongs to the aspartate-semialdehyde dehydrogenase family. Homodimer.

The catalysed reaction is L-aspartate 4-semialdehyde + phosphate + NADP(+) = 4-phospho-L-aspartate + NADPH + H(+). Its pathway is amino-acid biosynthesis; L-lysine biosynthesis via DAP pathway; (S)-tetrahydrodipicolinate from L-aspartate: step 2/4. It participates in amino-acid biosynthesis; L-methionine biosynthesis via de novo pathway; L-homoserine from L-aspartate: step 2/3. It functions in the pathway amino-acid biosynthesis; L-threonine biosynthesis; L-threonine from L-aspartate: step 2/5. Its function is as follows. Catalyzes the NADPH-dependent formation of L-aspartate-semialdehyde (L-ASA) by the reductive dephosphorylation of L-aspartyl-4-phosphate. The sequence is that of Aspartate-semialdehyde dehydrogenase from Shewanella sp. (strain DB6705).